We begin with the raw amino-acid sequence, 449 residues long: Glucose-6-phosphate isomerase (449 aa).

Glutamate 291 functions as the Proton donor in the catalytic mechanism. Catalysis depends on residues histidine 312 and lysine 426.

Belongs to the GPI family.

The protein localises to the cytoplasm. The catalysed reaction is alpha-D-glucose 6-phosphate = beta-D-fructose 6-phosphate. It participates in carbohydrate biosynthesis; gluconeogenesis. Its pathway is carbohydrate degradation; glycolysis; D-glyceraldehyde 3-phosphate and glycerone phosphate from D-glucose: step 2/4. Functionally, catalyzes the reversible isomerization of glucose-6-phosphate to fructose-6-phosphate. The protein is Glucose-6-phosphate isomerase of Streptococcus thermophilus (strain CNRZ 1066).